The following is a 301-amino-acid chain: Homoserine O-acetyltransferase (301 aa).

The active-site Acyl-thioester intermediate is Cys-142. Residues Lys-163 and Ser-192 each coordinate substrate. His-235 (proton acceptor) is an active-site residue. Glu-237 is an active-site residue. Position 249 (Arg-249) interacts with substrate.

It belongs to the MetA family.

The protein localises to the cytoplasm. The catalysed reaction is L-homoserine + acetyl-CoA = O-acetyl-L-homoserine + CoA. It functions in the pathway amino-acid biosynthesis; L-methionine biosynthesis via de novo pathway; O-acetyl-L-homoserine from L-homoserine: step 1/1. Its function is as follows. Transfers an acetyl group from acetyl-CoA to L-homoserine, forming acetyl-L-homoserine. This is Homoserine O-acetyltransferase from Succinatimonas hippei (strain DSM 22608 / JCM 16073 / KCTC 15190 / YIT 12066).